A 305-amino-acid polypeptide reads, in one-letter code: Spermatogenesis-associated protein 4 (305 aa).

The region spanning 49 to 155 (SRLSRSVLRW…EEVYTLLTHR (107 aa)) is the Calponin-homology (CH) domain.

As to expression, highly expressed in testis, the expression is observed precisely in seminiferous tubules.

The protein localises to the nucleus. Its function is as follows. May play a role in apoptosis regulation. This Homo sapiens (Human) protein is Spermatogenesis-associated protein 4 (SPATA4).